We begin with the raw amino-acid sequence, 329 residues long: GTP 3',8-cyclase (329 aa).

In terms of domain architecture, Radical SAM core spans 8 to 234; it reads AFARKYYYLR…QLRQRSDGPA (227 aa). Residue Arg17 coordinates GTP. [4Fe-4S] cluster is bound by residues Cys24 and Cys28. Tyr30 is a binding site for S-adenosyl-L-methionine. Cys31 is a [4Fe-4S] cluster binding site. Arg68 contacts GTP. Gly72 is an S-adenosyl-L-methionine binding site. Position 99 (Thr99) interacts with GTP. Ser123 lines the S-adenosyl-L-methionine pocket. Lys160 lines the GTP pocket. Position 194 (Met194) interacts with S-adenosyl-L-methionine. [4Fe-4S] cluster-binding residues include Cys257 and Cys260. 262–264 is a GTP binding site; the sequence is RLR. Residue Cys274 participates in [4Fe-4S] cluster binding.

Belongs to the radical SAM superfamily. MoaA family. Monomer and homodimer. Requires [4Fe-4S] cluster as cofactor.

It catalyses the reaction GTP + AH2 + S-adenosyl-L-methionine = (8S)-3',8-cyclo-7,8-dihydroguanosine 5'-triphosphate + 5'-deoxyadenosine + L-methionine + A + H(+). Its pathway is cofactor biosynthesis; molybdopterin biosynthesis. Its function is as follows. Catalyzes the cyclization of GTP to (8S)-3',8-cyclo-7,8-dihydroguanosine 5'-triphosphate. In Escherichia coli O17:K52:H18 (strain UMN026 / ExPEC), this protein is GTP 3',8-cyclase.